An 89-amino-acid chain; its full sequence is Small ribosomal subunit protein uS14 (89 aa).

The protein belongs to the universal ribosomal protein uS14 family. In terms of assembly, part of the 30S ribosomal subunit. Contacts proteins S3 and S10.

Binds 16S rRNA, required for the assembly of 30S particles and may also be responsible for determining the conformation of the 16S rRNA at the A site. This is Small ribosomal subunit protein uS14 from Flavobacterium johnsoniae (strain ATCC 17061 / DSM 2064 / JCM 8514 / BCRC 14874 / CCUG 350202 / NBRC 14942 / NCIMB 11054 / UW101) (Cytophaga johnsonae).